The sequence spans 300 residues: Probable L-serine dehydratase, alpha chain (300 aa).

This sequence belongs to the iron-sulfur dependent L-serine dehydratase family. As to quaternary structure, heterodimer of an alpha chain and a beta chain. [4Fe-4S] cluster is required as a cofactor.

The catalysed reaction is L-serine = pyruvate + NH4(+). The protein operates within carbohydrate biosynthesis; gluconeogenesis. This is Probable L-serine dehydratase, alpha chain (sdaAA) from Bacillus subtilis (strain 168).